Here is a 216-residue protein sequence, read N- to C-terminus: Peptide deformylase 1 (216 aa).

Residues cysteine 135 and histidine 177 each contribute to the Fe cation site. The active site involves glutamate 178. Histidine 181 contacts Fe cation.

It belongs to the polypeptide deformylase family. Fe(2+) is required as a cofactor.

It catalyses the reaction N-terminal N-formyl-L-methionyl-[peptide] + H2O = N-terminal L-methionyl-[peptide] + formate. Its function is as follows. Removes the formyl group from the N-terminal Met of newly synthesized proteins. Requires at least a dipeptide for an efficient rate of reaction. N-terminal L-methionine is a prerequisite for activity but the enzyme has broad specificity at other positions. The protein is Peptide deformylase 1 of Streptomyces avermitilis (strain ATCC 31267 / DSM 46492 / JCM 5070 / NBRC 14893 / NCIMB 12804 / NRRL 8165 / MA-4680).